Here is a 447-residue protein sequence, read N- to C-terminus: Alliin lyase (447 aa).

Positions 1–2 (QA) are excised as a propeptide. One can recognise an EGF-like; atypical domain in the interval 15–61 (EAVANINCSGHGRAFLDGILSDGSPKCECNTCYTGADCSQKITGCSA). N-linked (GlcNAc...) asparagine glycosylation is present at asparagine 21. 3 disulfides stabilise this stretch: cysteine 22/cysteine 41, cysteine 43/cysteine 52, and cysteine 46/cysteine 59. A chloride-binding site is contributed by 94–102 (YFFNPVSNF). N-linked (GlcNAc...) asparagine glycosylation is found at asparagine 148 and asparagine 193. The residue at position 253 (lysine 253) is an N6-(pyridoxal phosphate)lysine. The N-linked (GlcNAc...) asparagine glycan is linked to asparagine 330. A disulfide bridge connects residues cysteine 370 and cysteine 378.

The protein belongs to the alliinase family. Homodimer. Pyridoxal 5'-phosphate serves as cofactor.

It is found in the vacuole. It catalyses the reaction an S-alkyl-L-cysteine S-oxide = an S-alkyl sulfenate + 2-aminoprop-2-enoate. The sequence is that of Alliin lyase from Allium cepa var. aggregatum (Shallot).